The primary structure comprises 152 residues: UPF0735 ACT domain-containing protein SAS1579 (152 aa).

An ACT domain is found at 75–150 (TLILYVTDIV…YVSKVELISM (76 aa)).

This sequence belongs to the UPF0735 family.

In Staphylococcus aureus (strain MSSA476), this protein is UPF0735 ACT domain-containing protein SAS1579.